The primary structure comprises 199 residues: MDKIREKLSNLKLEAESWQEKYEELKEKNKDLEQENVEKENQIKSLTVKNQQLEDEIEKLEAGLSDSKQTEQDNVEKENQIKSLTVKNHQLEEEIEKLEAELAESKQLSEDSHHLQSNNDNFSKKNQQLEEDLEESDTKLKETTEKLRESDLKADQLERRVAALEEQREEWERKNEELTVKYEDAKKELDEIAASLENL.

Residues 1–199 (MDKIREKLSN…DEIAASLENL (199 aa)) adopt a coiled-coil conformation. Residues Lys39 and Lys59 each participate in a glycyl lysine isopeptide (Lys-Gly) (interchain with G-Cter in ubiquitin) cross-link. Disordered stretches follow at residues 59 to 81 (KLEA…ENQI) and 102 to 147 (LAES…TEKL). 2 stretches are compositionally biased toward basic and acidic residues: residues 68-80 (KQTE…KENQ) and 102-114 (LAES…DSHH). The segment covering 115–126 (LQSNNDNFSKKN) has biased composition (polar residues). The span at 136–147 (SDTKLKETTEKL) shows a compositional bias: basic and acidic residues. A Glycyl lysine isopeptide (Lys-Gly) (interchain with G-Cter in ubiquitin) cross-link involves residue Lys187. Ser195 is subject to Phosphoserine.

In terms of assembly, homodimer.

The protein resides in the cytoplasm. It is found in the cytoskeleton. The chain is Tropomyosin-1 (TPM1) from Saccharomyces cerevisiae (strain ATCC 204508 / S288c) (Baker's yeast).